We begin with the raw amino-acid sequence, 109 residues long: Aquaporin-2 (109 aa).

The Cytoplasmic portion of the chain corresponds to serine 1–arginine 6. The chain crosses the membrane as a helical span at residues alanine 7 to leucine 27. Over asparagine 28–serine 35 the chain is Extracellular. The helical transmembrane segment at valine 36 to leucine 54 threads the bilayer. Residues glycine 55 to glycine 59 lie on the Cytoplasmic side of the membrane. An intramembrane region (discontinuously helical) is located at residues alanine 60–alanine 69. The NPA 1 motif lies at asparagine 63–alanine 65. At cysteine 70–arginine 80 the chain is on the cytoplasmic side. A helical membrane pass occupies residues alanine 81–leucine 102. At threonine 103–glycine 109 the chain is on the extracellular side.

The protein belongs to the MIP/aquaporin (TC 1.A.8) family. In terms of assembly, homotetramer. In terms of processing, serine phosphorylation is necessary and sufficient for expression at the apical membrane. Endocytosis is not phosphorylation-dependent. Post-translationally, N-glycosylated.

The protein resides in the apical cell membrane. It localises to the basolateral cell membrane. The protein localises to the cell membrane. It is found in the cytoplasmic vesicle membrane. Its subcellular location is the golgi apparatus. The protein resides in the trans-Golgi network membrane. The catalysed reaction is H2O(in) = H2O(out). It catalyses the reaction glycerol(in) = glycerol(out). Functionally, forms a water-specific channel that provides the plasma membranes of renal collecting duct with high permeability to water, thereby permitting water to move in the direction of an osmotic gradient. Plays an essential role in renal water homeostasis. Could also be permeable to glycerol. In Elephas maximus (Indian elephant), this protein is Aquaporin-2.